Reading from the N-terminus, the 861-residue chain is Bifunctional uridylyltransferase/uridylyl-removing enzyme (861 aa).

Positions M1 to R321 are uridylyltransferase. The segment at L322 to T678 is uridylyl-removing. The 123-residue stretch at V440 to L562 folds into the HD domain. 2 consecutive ACT domains span residues E679–R760 and Q788–Y861.

It belongs to the GlnD family. The cofactor is Mg(2+).

It carries out the reaction [protein-PII]-L-tyrosine + UTP = [protein-PII]-uridylyl-L-tyrosine + diphosphate. The catalysed reaction is [protein-PII]-uridylyl-L-tyrosine + H2O = [protein-PII]-L-tyrosine + UMP + H(+). With respect to regulation, uridylyltransferase (UTase) activity is inhibited by glutamine, while glutamine activates uridylyl-removing (UR) activity. Modifies, by uridylylation and deuridylylation, the PII regulatory proteins (GlnB and homologs), in response to the nitrogen status of the cell that GlnD senses through the glutamine level. Under low glutamine levels, catalyzes the conversion of the PII proteins and UTP to PII-UMP and PPi, while under higher glutamine levels, GlnD hydrolyzes PII-UMP to PII and UMP (deuridylylation). Thus, controls uridylylation state and activity of the PII proteins, and plays an important role in the regulation of nitrogen assimilation and metabolism. The polypeptide is Bifunctional uridylyltransferase/uridylyl-removing enzyme (Legionella pneumophila (strain Paris)).